The chain runs to 628 residues: MEPPDAPAQARGAPRLLLLAVLLAAHPDAQAEVRLSVPPLVEVMRGKSVILDCTPTGTHDHYMLEWFLTDRSGARPRLASAEMQGSELQVTMHDTRGRSPPYQLDSQGRLVLAEAQVGDERDYVCVVRAGAAGTAEATARLNVFAKPEATEVSPNKGTLSVMEDSAQEIATCNSRNGNPAPKITWYRNGQRLEVPVEMNPEGYMTSRTVREASGLLSLTSTLYLRLRKDDRDASFHCAAHYSLPEGRHGRLDSPTFHLTLHYPTEHVQFWVGSPSTPAGWVREGDTVQLLCRGDGSPSPEYTLFRLQDEQEEVLNVNLEGNLTLEGVTRGQSGTYGCRVEDYDAADDVQLSKTLELRVAYLDPLELSEGKVLSLPLNSSAVVNCSVHGLPTPALRWTKDSTPLGDGPMLSLSSITFDSNGTYVCEASLPTVPVLSRTQNFTLLVQGSPELKTAEIEPKADGSWREGDEVTLICSARGHPDPKLSWSQLGGSPAEPIPGRQGWVSSSLTLKVTSALSRDGISCEASNPHGNKRHVFHFGTVSPQTSQAGVAVMAVAVSVGLLLLVVAVFYCVRRKGGPCCRQRREKGAPPPGEPGLSHSGSEQPEQTGLLMGGASGGARGGSGGFGDEC.

The first 31 residues, Met-1–Ala-31, serve as a signal peptide directing secretion. 2 Ig-like V-type domains span residues Glu-32–Asn-142 and Pro-147–His-257. At Glu-32 to Ala-547 the chain is on the extracellular side. Cystine bridges form between Cys-53/Cys-125, Cys-172/Cys-237, and Cys-291/Cys-337. Ig-like C2-type domains lie at Pro-274 to Glu-355, Pro-363 to Thr-441, and Pro-448 to Ser-541. The segment at Glu-309–Glu-312 is interaction with laminin alpha5. N-linked (GlcNAc...) asparagine glycans are attached at residues Asn-321, Asn-377, Asn-383, Asn-419, and Asn-439. A disulfide bridge links Cys-384 with Cys-424. A disulfide bond links Cys-473 and Cys-522. A helical transmembrane segment spans residues Gly-548–Phe-568. Over Tyr-569–Cys-628 the chain is Cytoplasmic. The disordered stretch occupies residues Cys-579–Cys-628. Ser-596 carries the phosphoserine; by GSK3 modification. A Phosphoserine; by CK2 modification is found at Ser-598. At Ser-600 the chain carries Phosphoserine. Gly residues predominate over residues Leu-609–Cys-628. Residue Ser-621 is modified to Phosphoserine; by PKA or PKB/AKT1.

Homodimer. Interacts with ITGA4:ITGB1. Interacts with spectrins SPTA1 and SPTB1. Post-translationally, epinephrine-stimulated phosphorylation of Ser-621 by PKA enhances adhesion to laminin. Ser-621 can also be phosphorylated by AKT1. Wide tissue distribution (highest in the pancreas and very low in brain). Closely associated with the basal layer of cells in epithelia and the endothelium of blood vessel walls.

Its subcellular location is the cell membrane. Its function is as follows. Transmembrane glycoprotein that functions as both a receptor and an adhesion molecule playing a crucial role in cell adhesion, motility, migration and invasion. Extracellular domain enables binding to extracellular matrix proteins, such as laminin, integrin and other ligands while its intracellular domain interacts with cytoskeletal proteins like hemoglobin, facilitating cell signal transduction. Serves as a receptor for laminin alpha-5/LAMA5 to promote cell adhesion. Mechanistically, JAK2 induces BCAM phosphorylation and activates its adhesion to laminin by stimulating a Rap1/AKT signaling pathway in the absence of EPOR. This Homo sapiens (Human) protein is Basal cell adhesion molecule (BCAM).